The following is a 383-amino-acid chain: tRNA-specific 2-thiouridylase MnmA (383 aa).

Residues 30–37 (GMSGGVDS) and methionine 56 each bind ATP. The tract at residues 116–118 (NPD) is interaction with target base in tRNA. The Nucleophile role is filled by cysteine 121. Cysteine 121 and cysteine 218 are joined by a disulfide. Glycine 146 contributes to the ATP binding site. Residues 168–170 (KDQ) are interaction with tRNA. Cysteine 218 (cysteine persulfide intermediate) is an active-site residue. An interaction with tRNA region spans residues 330-331 (RY).

It belongs to the MnmA/TRMU family.

It is found in the cytoplasm. It carries out the reaction S-sulfanyl-L-cysteinyl-[protein] + uridine(34) in tRNA + AH2 + ATP = 2-thiouridine(34) in tRNA + L-cysteinyl-[protein] + A + AMP + diphosphate + H(+). Catalyzes the 2-thiolation of uridine at the wobble position (U34) of tRNA, leading to the formation of s(2)U34. This is tRNA-specific 2-thiouridylase MnmA from Haemophilus influenzae (strain ATCC 51907 / DSM 11121 / KW20 / Rd).